The primary structure comprises 503 residues: Maturase K (503 aa).

It belongs to the intron maturase 2 family. MatK subfamily.

The protein resides in the plastid. It localises to the chloroplast. Its function is as follows. Usually encoded in the trnK tRNA gene intron. Probably assists in splicing its own and other chloroplast group II introns. This chain is Maturase K, found in Kunzea pulchella (Red kunzea).